Reading from the N-terminus, the 300-residue chain is Homoserine kinase (300 aa).

An ATP-binding site is contributed by 86–96 (PVARGLGSSAT).

The protein belongs to the GHMP kinase family. Homoserine kinase subfamily.

It is found in the cytoplasm. The catalysed reaction is L-homoserine + ATP = O-phospho-L-homoserine + ADP + H(+). Its pathway is amino-acid biosynthesis; L-threonine biosynthesis; L-threonine from L-aspartate: step 4/5. In terms of biological role, catalyzes the ATP-dependent phosphorylation of L-homoserine to L-homoserine phosphate. The sequence is that of Homoserine kinase from Persephonella marina (strain DSM 14350 / EX-H1).